A 269-amino-acid polypeptide reads, in one-letter code: Hydroxyethylthiazole kinase (269 aa).

M45 is a binding site for substrate. ATP is bound by residues R121 and T167. Residue G194 participates in substrate binding.

Belongs to the Thz kinase family. Mg(2+) serves as cofactor.

The catalysed reaction is 5-(2-hydroxyethyl)-4-methylthiazole + ATP = 4-methyl-5-(2-phosphooxyethyl)-thiazole + ADP + H(+). It functions in the pathway cofactor biosynthesis; thiamine diphosphate biosynthesis; 4-methyl-5-(2-phosphoethyl)-thiazole from 5-(2-hydroxyethyl)-4-methylthiazole: step 1/1. In terms of biological role, catalyzes the phosphorylation of the hydroxyl group of 4-methyl-5-beta-hydroxyethylthiazole (THZ). The sequence is that of Hydroxyethylthiazole kinase from Bacillus cytotoxicus (strain DSM 22905 / CIP 110041 / 391-98 / NVH 391-98).